The sequence spans 322 residues: Acetyl-coenzyme A carboxylase carboxyl transferase subunit alpha (322 aa).

The CoA carboxyltransferase C-terminal domain occupies 30 to 293; sequence AVDISAEILR…KKALQDSLKL (264 aa).

It belongs to the AccA family. Acetyl-CoA carboxylase is a heterohexamer composed of biotin carboxyl carrier protein (AccB), biotin carboxylase (AccC) and two subunits each of ACCase subunit alpha (AccA) and ACCase subunit beta (AccD).

Its subcellular location is the cytoplasm. The catalysed reaction is N(6)-carboxybiotinyl-L-lysyl-[protein] + acetyl-CoA = N(6)-biotinyl-L-lysyl-[protein] + malonyl-CoA. Its pathway is lipid metabolism; malonyl-CoA biosynthesis; malonyl-CoA from acetyl-CoA: step 1/1. Its function is as follows. Component of the acetyl coenzyme A carboxylase (ACC) complex. First, biotin carboxylase catalyzes the carboxylation of biotin on its carrier protein (BCCP) and then the CO(2) group is transferred by the carboxyltransferase to acetyl-CoA to form malonyl-CoA. The chain is Acetyl-coenzyme A carboxylase carboxyl transferase subunit alpha from Nitrosospira multiformis (strain ATCC 25196 / NCIMB 11849 / C 71).